Consider the following 101-residue polypeptide: Small ribosomal subunit protein uS14 (101 aa).

Belongs to the universal ribosomal protein uS14 family. In terms of assembly, part of the 30S ribosomal subunit. Contacts proteins S3 and S10.

Its function is as follows. Binds 16S rRNA, required for the assembly of 30S particles and may also be responsible for determining the conformation of the 16S rRNA at the A site. This is Small ribosomal subunit protein uS14 from Haemophilus ducreyi (strain 35000HP / ATCC 700724).